We begin with the raw amino-acid sequence, 216 residues long: Nudix hydrolase 26, chloroplastic (216 aa).

The N-terminal 53 residues, 1–53, are a transit peptide targeting the chloroplast; the sequence is MALYRPLLLHHPTSPSVTTFLRNYPSKPIKFSSLPFLHRCRKSRVSSSSARCC. Positions 62–209 constitute a Nudix hydrolase domain; the sequence is GYRRNVGVCL…KKPVYKEVMS (148 aa). The short motif at 95–116 is the Nudix box element; that stretch reads GGIDEGEDPRVAVMRELKEETG. Mn(2+)-binding residues include glutamate 110 and glutamate 114.

Belongs to the Nudix hydrolase family. It depends on Mg(2+) as a cofactor. Mn(2+) is required as a cofactor. As to expression, expressed in roots, leaves, stems and inflorescences.

It is found in the plastid. The protein resides in the chloroplast. Its function is as follows. Mediates the hydrolysis of some nucleoside diphosphate derivatives. Can use diadenosine 5',5'''-P(1)P(5) pentaphosphate (Ap(5)A), diadenosine 5',5'''-P(1)P(4) tetraphosphate (Ap(4)A) and diadenosine 5',5'''-P(1)P(3) triphosphate (Ap(3)A) as substrates. The chain is Nudix hydrolase 26, chloroplastic (NUDT26) from Arabidopsis thaliana (Mouse-ear cress).